A 414-amino-acid polypeptide reads, in one-letter code: eIF5-mimic protein 1 (414 aa).

The segment at M1–K22 is disordered. The region spanning V248 to I414 is the W2 domain.

This sequence belongs to the BZW family.

The protein localises to the cytoplasm. Translation initiation regulator which may repress non-AUG initiated translation and repeat-associated non-AUG (RAN) initiated translation by acting as a competitive inhibitor of eukaryotic translation initiation factor 5 (EIF5) function. The sequence is that of eIF5-mimic protein 1 (BZW2) from Gallus gallus (Chicken).